Reading from the N-terminus, the 400-residue chain is Lysophospholipid transporter LplT (400 aa).

11 helical membrane passes run 19–39, 53–73, 91–111, 139–159, 164–184, 227–247, 257–277, 281–301, 304–324, 352–372, and 373–393; these read VIVAQFLSAFGDNALLFATLA, VLQMVFVGAYILFAPFVGQIA, AGAAGICLGVNPFVGYTLVGI, LMEASTIAAILLGSVAGGVLA, IAALVACALAYAGAVAANLFI, LFWGAGVTLRFLLVLWVPVAL, YLNAMVAVGIVVGAGAAAKLV, TVSRCMPAGILIGVVVAIFSL, ALLPAYALLLLIGMLGGFFVV, NSAMLLMLGLYSLAVLVGVPA, and VAIGIGFGVLFALAIAALWIW.

It belongs to the major facilitator superfamily. LplT (TC 2.A.1.42) family.

The protein resides in the cell inner membrane. Catalyzes the facilitated diffusion of 2-acyl-glycero-3-phosphoethanolamine (2-acyl-GPE) into the cell. This is Lysophospholipid transporter LplT from Salmonella gallinarum (strain 287/91 / NCTC 13346).